An 88-amino-acid chain; its full sequence is UPF0250 protein Shew_2940 (88 aa).

It belongs to the UPF0250 family.

The sequence is that of UPF0250 protein Shew_2940 from Shewanella loihica (strain ATCC BAA-1088 / PV-4).